Reading from the N-terminus, the 1499-residue chain is Multidrug resistance protein CDR2 (1499 aa).

At 1 to 511 (MSTANTSLSQ…NFLRMKGDPS (511 aa)) the chain is on the cytoplasmic side. The region spanning 148–402 (FTTEAINKLK…FENMGWKCPQ (255 aa)) is the ABC transporter 1 domain. Helical transmembrane passes span 512-532 (IPLISILSQLVMGLILASVFF), 546-566 (GALFFSVLFNAFSSLLEILSL), 596-616 (LPVKLLMTMSFNIVYYFMVNL), 621-641 (GNFFFYWLMCASCTLVMSHMF), 660-680 (VFLLAMIIYAGFVLPIPYILG), and 763-783 (FGITVAFAVFFLGVYVALTEF). At 784–1193 (NKGAMQKGEI…TIVQDWRSPG (410 aa)) the chain is on the cytoplasmic side. Residues 857-1101 (FFWRDLTYQV…MINYFEKYGA (245 aa)) enclose the ABC transporter 2 domain. 893-900 (GASGAGKT) provides a ligand contact to ATP. Transmembrane regions (helical) follow at residues 1194–1214 (YIYSKLILVISSSLFIGFSFF), 1229–1249 (AVFMFFVPFTTFIDQMLPYFV), 1279–1299 (IPFQIVVGTISYFCWYYPVGL), 1315–1335 (LMWMLLTAFYVYTSTMGQLAI), 1354–1374 (LCLMFCGVLAGPNVIPGFWIF), and 1465–1485 (FGIFVAFIGINIILTIFFYWL).

The protein belongs to the ABC transporter superfamily. ABCG family. PDR (TC 3.A.1.205) subfamily.

The protein localises to the membrane. Multidrug efflux transporter. Confers resistance to azole antifungal agents, to other antifungals (terbinafine, amorolfine) and to a variety of metabolic inhibitors. The polypeptide is Multidrug resistance protein CDR2 (CDR2) (Candida albicans (strain SC5314 / ATCC MYA-2876) (Yeast)).